A 90-amino-acid polypeptide reads, in one-letter code: Small ribosomal subunit protein uS15c (90 aa).

This sequence belongs to the universal ribosomal protein uS15 family. As to quaternary structure, part of the 30S ribosomal subunit.

The protein resides in the plastid. It is found in the chloroplast. The polypeptide is Small ribosomal subunit protein uS15c (rps15-A) (Ipomoea purpurea (Common morning glory)).